A 258-amino-acid polypeptide reads, in one-letter code: MGVERIKAAFENGKKAFIPYVMGGDGGLEILKERIRFLDEAGASIVEIGIPFSDPVADGPTIQRAGKRALDSGVTVKGIFQALIEVRKEVQIPFVLMTYLNPVLAFGKERFIENCMEAGVDGIIVPDLPYEEQDIIAPLLREANIALIPLVTVTSPIERIKKITSESEGFVYAVTVAGVTGVRQNFKDEIHSYLEKVKSHTHLPVVAGFGISTKEHVEEMVTICDGVVVGSKVIELLENEKREEICEFIQATKQKEEA.

Residues E47 and D58 each act as proton acceptor in the active site.

It belongs to the TrpA family. As to quaternary structure, tetramer of two alpha and two beta chains.

It carries out the reaction (1S,2R)-1-C-(indol-3-yl)glycerol 3-phosphate + L-serine = D-glyceraldehyde 3-phosphate + L-tryptophan + H2O. Its pathway is amino-acid biosynthesis; L-tryptophan biosynthesis; L-tryptophan from chorismate: step 5/5. The alpha subunit is responsible for the aldol cleavage of indoleglycerol phosphate to indole and glyceraldehyde 3-phosphate. This is Tryptophan synthase alpha chain from Bacillus anthracis (strain CDC 684 / NRRL 3495).